We begin with the raw amino-acid sequence, 202 residues long: Small ribosomal subunit protein uS4 (202 aa).

The 63-residue stretch at 93–155 folds into the S4 RNA-binding domain; it reads RRLDNVVRRV…ENLKNLYRGV (63 aa).

Belongs to the universal ribosomal protein uS4 family. As to quaternary structure, part of the 30S ribosomal subunit. Contacts protein S5. The interaction surface between S4 and S5 is involved in control of translational fidelity.

Functionally, one of the primary rRNA binding proteins, it binds directly to 16S rRNA where it nucleates assembly of the body of the 30S subunit. Its function is as follows. With S5 and S12 plays an important role in translational accuracy. The chain is Small ribosomal subunit protein uS4 from Rhodopirellula baltica (strain DSM 10527 / NCIMB 13988 / SH1).